Consider the following 666-residue polypeptide: DNA ligase (666 aa).

NAD(+) is bound by residues 34 to 38, 83 to 84, and glutamate 114; these read DEEYD and SL. The active-site N6-AMP-lysine intermediate is the lysine 116. NAD(+)-binding residues include arginine 137, glutamate 174, lysine 290, and lysine 314. Zn(2+) contacts are provided by cysteine 408, cysteine 411, cysteine 424, and cysteine 429. Residues 584 to 666 form the BRCT domain; it reads SIEGPLKGLT…LKMVKREHNG (83 aa).

It belongs to the NAD-dependent DNA ligase family. LigA subfamily. Mg(2+) is required as a cofactor. It depends on Mn(2+) as a cofactor.

It carries out the reaction NAD(+) + (deoxyribonucleotide)n-3'-hydroxyl + 5'-phospho-(deoxyribonucleotide)m = (deoxyribonucleotide)n+m + AMP + beta-nicotinamide D-nucleotide.. In terms of biological role, DNA ligase that catalyzes the formation of phosphodiester linkages between 5'-phosphoryl and 3'-hydroxyl groups in double-stranded DNA using NAD as a coenzyme and as the energy source for the reaction. It is essential for DNA replication and repair of damaged DNA. The polypeptide is DNA ligase (Coprothermobacter proteolyticus (strain ATCC 35245 / DSM 5265 / OCM 4 / BT)).